Consider the following 263-residue polypeptide: Putative alpha/beta hydrolase L404 (263 aa).

Residue glycine 2 is the site of N-myristoyl glycine; by host attachment.

The protein belongs to the AB hydrolase superfamily.

This chain is Putative alpha/beta hydrolase L404, found in Acanthamoeba polyphaga (Amoeba).